The sequence spans 731 residues: E3 ubiquitin-protein ligase SMURF1 (731 aa).

Positions 1–120 (MSNVVTRRGG…TGYQRLDLCK (120 aa)) constitute a C2 domain. The interval 210–235 (RVRGPEVREHVQTPQNRSHGFQSQDL) is disordered. Positions 221-234 (QTPQNRSHGFQSQD) are enriched in polar residues. WW domains follow at residues 233 to 266 (QDLP…DPRI) and 279 to 312 (GSLP…DPRL). Residues 394–731 (RPKDLKKRLM…VEETSGFAVE (338 aa)) enclose the HECT domain. The active-site Glycyl thioester intermediate is the Cys-699.

The protein localises to the cytoplasm. Its subcellular location is the cell membrane. The enzyme catalyses S-ubiquitinyl-[E2 ubiquitin-conjugating enzyme]-L-cysteine + [acceptor protein]-L-lysine = [E2 ubiquitin-conjugating enzyme]-L-cysteine + N(6)-ubiquitinyl-[acceptor protein]-L-lysine.. It functions in the pathway protein modification; protein ubiquitination. In terms of biological role, E3 ubiquitin-protein ligase that acts as a negative regulator of BMP signaling pathway. Mediates ubiquitination and degradation of smad1 and smad5, 2 receptor-regulated SMADs specific for the BMP pathway. Promotes ubiquitination and subsequent proteasomal degradation of TRAF family members and rhoa. May play a role in dendrite formation by melanocytes. The chain is E3 ubiquitin-protein ligase SMURF1 (smurf1) from Xenopus laevis (African clawed frog).